The following is a 509-amino-acid chain: Fumarate hydratase, mitochondrial (509 aa).

The N-terminal 43 residues, 1 to 43 (MYRSARSLHRFSASLSDLRAAQRSIKARNVCPAPGLRHQTVRM), are a transit peptide targeting the mitochondrion. Residues 144–146 (SGT), 175–178 (HPND), 185–187 (SSN), and Thr-233 each bind substrate. The active-site Proton donor/acceptor is the His-234. The active site involves Ser-364. Substrate-binding positions include Ser-365 and 370 to 372 (KVN).

Belongs to the class-II fumarase/aspartase family. Fumarase subfamily. Homotetramer.

The protein localises to the mitochondrion. It is found in the cytoplasm. Its subcellular location is the cytosol. The protein resides in the nucleus. It localises to the chromosome. The enzyme catalyses (S)-malate = fumarate + H2O. Its pathway is carbohydrate metabolism; tricarboxylic acid cycle; (S)-malate from fumarate: step 1/1. In terms of biological role, catalyzes the reversible stereospecific interconversion of fumarate to L-malate. Experiments in other species have demonstrated that specific isoforms of this protein act in defined pathways and favor one direction over the other. Its function is as follows. Catalyzes the hydration of fumarate to L-malate in the tricarboxylic acid (TCA) cycle to facilitate a transition step in the production of energy in the form of NADH. Catalyzes the dehydration of L-malate to fumarate. Fumarate metabolism in the cytosol plays a role during urea cycle and arginine metabolism; fumarate being a by-product of the urea cycle and amino-acid catabolism. Also plays a role in DNA repair by promoting non-homologous end-joining (NHEJ). In response to DNA damage translocates to the nucleus and accumulates at DNA double-strand breaks (DSBs): acts by catalyzing formation of fumarate. This is Fumarate hydratase, mitochondrial from Danio rerio (Zebrafish).